Consider the following 302-residue polypeptide: Ornithine carbamoyltransferase (302 aa).

Residues 47–50 (STRT), Gln-74, Arg-98, and 125–128 (HPCQ) contribute to the carbamoyl phosphate site. L-ornithine contacts are provided by residues Asn-156, Asp-220, and 224 to 225 (SM). Residues 260–261 (CL) and Arg-288 each bind carbamoyl phosphate.

The protein belongs to the aspartate/ornithine carbamoyltransferase superfamily. OTCase family.

The protein resides in the cytoplasm. The catalysed reaction is carbamoyl phosphate + L-ornithine = L-citrulline + phosphate + H(+). It functions in the pathway amino-acid biosynthesis; L-arginine biosynthesis; L-arginine from L-ornithine and carbamoyl phosphate: step 1/3. Its function is as follows. Reversibly catalyzes the transfer of the carbamoyl group from carbamoyl phosphate (CP) to the N(epsilon) atom of ornithine (ORN) to produce L-citrulline. The polypeptide is Ornithine carbamoyltransferase (Methanosphaera stadtmanae (strain ATCC 43021 / DSM 3091 / JCM 11832 / MCB-3)).